A 278-amino-acid chain; its full sequence is Trehalose monomycolate transport factor A (278 aa).

Residue Met-1 is a topological domain, periplasmic. Residues Val-2–Val-22 traverse the membrane as a helical segment. The Cytoplasmic portion of the chain corresponds to Asp-23–Arg-278. Positions Pro-200 to Arg-278 are disordered. Residues Asn-269–Arg-278 show a composition bias toward basic and acidic residues.

Monomer. Interacts (via N-terminus) with MmpL3; active trehalose monomycolate (TMM) biosynthesis is not required for the complex formation. Interacts with MSMEG_5308.

The protein resides in the cell inner membrane. It localises to the cell septum. The protein localises to the cell tip. Required for MmpL3-dependent trehalose monomycolate (TMM) transport to the cell wall. Required for growth and cell elongation. The chain is Trehalose monomycolate transport factor A from Mycolicibacterium smegmatis (strain ATCC 700084 / mc(2)155) (Mycobacterium smegmatis).